The following is a 480-amino-acid chain: ATP synthase subunit beta (480 aa).

Glycine 154–threonine 161 contributes to the ATP binding site.

The protein belongs to the ATPase alpha/beta chains family. In terms of assembly, F-type ATPases have 2 components, CF(1) - the catalytic core - and CF(0) - the membrane proton channel. CF(1) has five subunits: alpha(3), beta(3), gamma(1), delta(1), epsilon(1). CF(0) has four main subunits: a(1), b(1), b'(1) and c(9-12).

The protein resides in the cell inner membrane. It carries out the reaction ATP + H2O + 4 H(+)(in) = ADP + phosphate + 5 H(+)(out). Functionally, produces ATP from ADP in the presence of a proton gradient across the membrane. The catalytic sites are hosted primarily by the beta subunits. This chain is ATP synthase subunit beta, found in Bradyrhizobium sp. (strain ORS 278).